The following is a 437-amino-acid chain: O-antigen export system ATP-binding protein RfbB (437 aa).

Residues 37 to 256 (LRGKRQSRDA…YREAISLAEA (220 aa)) form the ABC transporter domain. 69-76 (GRNGSGKS) provides a ligand contact to ATP.

It belongs to the ABC transporter superfamily.

It localises to the cell inner membrane. In terms of biological role, may form an ATP-driven O-antigen export apparatus, in association with RfbA. This is O-antigen export system ATP-binding protein RfbB (rfbB) from Myxococcus xanthus.